A 473-amino-acid chain; its full sequence is MASEVSVASSGSEHSGAQKCPFQDPGLSSMDQDSRLRDILSRFNREKIPERAVHARGAGAYGEFEVTHDVSDICDIDMLLGVGKKTPCVVRFSTTTLERGSAESVRDVKGMAIKHFTQDGNWDWVCLNIPMFFIRDPSKFPDMVHAQRPDPTTNVANPSRWWEFVCNNHETLHMVMFQFSDFGTMFDYRSMSGYAAHAYKWVMPDGSWKYVHWFLASDQGPNFETGHQAKQIGADDAESATRDLYQSLERGEYPSWTVKVQVVDPEDAPKLPFNILDVTKHWNLGNYPPDIDVIPGRTLGKLTLKKEPQDYFEEIEQLAFSPSRLVHGVEASEDPMLQARLFAYPDAQKHRLGPNNLDLPANRTKKFADGARPEKAEMAPQKVPSQEHADWVSQVKSSSWSEPNETDYKFPREFWKALPRLRGEAFQNSLVVNMAKSVSQVPVDMREKVYSTLALIADDLADRVRTMTEEIVE.

The span at 1–15 (MASEVSVASSGSEHS) shows a compositional bias: low complexity. The segment at 1–31 (MASEVSVASSGSEHSGAQKCPFQDPGLSSMD) is disordered. The active site involves His-54. Tyr-344 lines the heme pocket. Residues 369–388 (DGARPEKAEMAPQKVPSQEH) form a disordered region.

This sequence belongs to the catalase family. It depends on heme as a cofactor.

It participates in alkaloid biosynthesis; ergot alkaloid biosynthesis. Its function is as follows. Catalase; part of the gene cluster that mediates the biosynthesis of fungal ergot alkaloid. DmaW catalyzes the first step of ergot alkaloid biosynthesis by condensing dimethylallyl diphosphate (DMAP) and tryptophan to form 4-dimethylallyl-L-tryptophan. The second step is catalyzed by the methyltransferase easF that methylates 4-dimethylallyl-L-tryptophan in the presence of S-adenosyl-L-methionine, resulting in the formation of 4-dimethylallyl-L-abrine. The catalase easC and the FAD-dependent oxidoreductase easE then transform 4-dimethylallyl-L-abrine to chanoclavine-I which is further oxidized by easD in the presence of NAD(+), resulting in the formation of chanoclavine-I aldehyde. Agroclavine dehydrogenase easG then mediates the conversion of chanoclavine-I aldehyde to agroclavine via a non-enzymatic adduct reaction: the substrate is an iminium intermediate that is formed spontaneously from chanoclavine-I aldehyde in the presence of glutathione. The presence of easA is not required to complete this reaction. Further conversion of agroclavine to paspalic acid is a two-step process involving oxidation of agroclavine to elymoclavine and of elymoclavine to paspalic acid, the second step being performed by the elymoclavine oxidase cloA. Paspalic acid is then further converted to D-lysergic acid. Ergopeptines are assembled from D-lysergic acid and three different amino acids by the D-lysergyl-peptide-synthetases composed each of a monomudular and a trimodular nonribosomal peptide synthetase subunit. LpsB and lpsC encode the monomodular subunits responsible for D-lysergic acid activation and incorporation into the ergopeptine backbone. LpsA1 and A2 subunits encode the trimodular nonribosomal peptide synthetase assembling the tripeptide portion of ergopeptines. LpsA1 is responsible for formation of the major ergopeptine, ergotamine, and lpsA2 for alpha-ergocryptine, the minor ergopeptine of the total alkaloid mixture elaborated by C.purpurea. D-lysergyl-tripeptides are assembled by the nonribosomal peptide synthetases and released as N-(D-lysergyl-aminoacyl)-lactams. Cyclolization of the D-lysergyl-tripeptides is performed by the Fe(2+)/2-ketoglutarate-dependent dioxygenase easH which introduces a hydroxyl group into N-(D-lysergyl-aminoacyl)-lactam at alpha-C of the aminoacyl residue followed by spontaneous condensation with the terminal lactam carbonyl group. In Claviceps purpurea (Ergot fungus), this protein is Catalase easC.